Consider the following 132-residue polypeptide: DNA-directed RNA polymerase subunit omega (132 aa).

The tract at residues 76-105 (EVDEPEQDAASIAEGQLTSGSQDEDEMPET) is disordered.

The protein belongs to the RNA polymerase subunit omega family. The RNAP catalytic core consists of 2 alpha, 1 beta, 1 beta' and 1 omega subunit. When a sigma factor is associated with the core the holoenzyme is formed, which can initiate transcription.

It carries out the reaction RNA(n) + a ribonucleoside 5'-triphosphate = RNA(n+1) + diphosphate. Promotes RNA polymerase assembly. Latches the N- and C-terminal regions of the beta' subunit thereby facilitating its interaction with the beta and alpha subunits. The protein is DNA-directed RNA polymerase subunit omega of Allorhizobium ampelinum (strain ATCC BAA-846 / DSM 112012 / S4) (Agrobacterium vitis (strain S4)).